An 80-amino-acid chain; its full sequence is Acyl carrier protein (80 aa).

One can recognise a Carrier domain in the interval 4–79 (DATLEKVRSI…DAVKYIEDKQ (76 aa)). Residue Ser-39 is modified to O-(pantetheine 4'-phosphoryl)serine.

It belongs to the acyl carrier protein (ACP) family. 4'-phosphopantetheine is transferred from CoA to a specific serine of apo-ACP by AcpS. This modification is essential for activity because fatty acids are bound in thioester linkage to the sulfhydryl of the prosthetic group.

It localises to the cytoplasm. The protein operates within lipid metabolism; fatty acid biosynthesis. Its function is as follows. Carrier of the growing fatty acid chain in fatty acid biosynthesis. In Prochlorococcus marinus (strain MIT 9211), this protein is Acyl carrier protein.